We begin with the raw amino-acid sequence, 23 residues long: Mu-conotoxin-like SxIIIB (23 aa).

Glutamine 1 carries the pyrrolidone carboxylic acid modification. Disulfide bonds link cysteine 3–cysteine 16, cysteine 4–cysteine 21, and cysteine 11–cysteine 22. Alanine 23 bears the Alanine amide mark.

It belongs to the conotoxin M superfamily. In terms of tissue distribution, expressed by the venom duct.

Its subcellular location is the secreted. Mu-conotoxins block voltage-gated sodium channels (Nav). This Conus striolatus (Cone snail) protein is Mu-conotoxin-like SxIIIB.